The chain runs to 126 residues: Histone H2B-alpha (126 aa).

Positions 1–34 are disordered; sequence MSAAEKKPASKAPAGKAPRDTMKSADKKRGKNRK. 2 positions are modified to N6-acetyllysine; alternate: Lys6 and Lys7. Residues Lys6 and Lys7 each participate in a glycyl lysine isopeptide (Lys-Gly) (interchain with G-Cter in SUMO); alternate cross-link. Ser10 bears the Phosphoserine mark. Lys11 carries the N6-acetyllysine modification. Residues 17–27 show a composition bias toward basic and acidic residues; the sequence is APRDTMKSADK. A Glycyl lysine isopeptide (Lys-Gly) (interchain with G-Cter in ubiquitin) cross-link involves residue Lys120.

The protein belongs to the histone H2B family. As to quaternary structure, the nucleosome is a histone octamer containing two molecules each of H2A, H2B, H3 and H4 assembled in one H3-H4 heterotetramer and two H2A-H2B heterodimers. The octamer wraps approximately 147 bp of DNA. Interacts with rik1. In terms of processing, monoubiquitinated by the rhp6/ubc2-bre1 complex to form H2BK123ub1. H2BK123ub1 gives a specific tag for epigenetic transcriptional activation and is also prerequisite for H3K4me and H3K79me formation. H2BK123ub1 also modulates the formation of double-strand breaks during meiosis and is a prerequisite for DNA-damage checkpoint activation. Phosphorylated by shk1 to form H2BS10ph during progression through meiotic prophase. May be correlated with chromosome condensation. Post-translationally, acetylation of N-terminal lysines and particularly formation of H2BK11ac has a positive effect on transcription. In terms of processing, sumoylation to form H2BK6su or H2BK7su occurs preferentially near the telomeres and represses gene transcription.

The protein localises to the nucleus. It is found in the chromosome. Its function is as follows. Core component of nucleosome. Nucleosomes wrap and compact DNA into chromatin, limiting DNA accessibility to the cellular machineries which require DNA as a template. Histones thereby play a central role in transcription regulation, DNA repair, DNA replication and chromosomal stability. DNA accessibility is regulated via a complex set of post-translational modifications of histones, also called histone code, and nucleosome remodeling. This Schizosaccharomyces pombe (strain 972 / ATCC 24843) (Fission yeast) protein is Histone H2B-alpha (htb1).